The primary structure comprises 86 residues: Acyl carrier protein (86 aa).

Residues 10–85 (DKIEQKVIEM…DVIKYIKERQ (76 aa)) enclose the Carrier domain. Ser45 carries the post-translational modification O-(pantetheine 4'-phosphoryl)serine.

The protein belongs to the acyl carrier protein (ACP) family. In terms of processing, 4'-phosphopantetheine is transferred from CoA to a specific serine of apo-ACP by AcpS. This modification is essential for activity because fatty acids are bound in thioester linkage to the sulfhydryl of the prosthetic group.

The protein localises to the cytoplasm. It participates in lipid metabolism; fatty acid biosynthesis. Carrier of the growing fatty acid chain in fatty acid biosynthesis. This Rickettsia africae (strain ESF-5) protein is Acyl carrier protein.